The primary structure comprises 910 residues: SWI/SNF-related matrix-associated actin-dependent regulator of chromatin subfamily A-like protein 1 (910 aa).

The disordered stretch occupies residues Met1–Ile170. At Ser2 the chain carries N-acetylserine. 2 mediates interaction with RPA2 regions span residues Ser2–Ala30 and Leu5–Ala30. Residues Leu3–Leu28 adopt a coiled-coil conformation. Over residues Glu7 to Trp29 the composition is skewed to basic and acidic residues. Composition is skewed to polar residues over residues Gln32–Leu54 and Ser70–Thr95. Positions Glu97–Gly107 are enriched in basic and acidic residues. A Phosphoserine modification is found at Ser117. A compositionally biased stretch (polar residues) spans Glu120–Ser131. The segment covering Phe150–Ala160 has biased composition (basic and acidic residues). Residue Ser164 is modified to Phosphoserine. HARP domains follow at residues Lys198–Glu268 and Ser284–Pro355. Positions Ser402 to Thr557 constitute a Helicase ATP-binding domain. Residue Asp415–Thr422 participates in ATP binding. Positions Asp506–His509 match the DESH box motif. The short motif at Arg601–Met618 is the Nuclear localization signal element. Positions Tyr672–Ala825 constitute a Helicase C-terminal domain. Low complexity predominate over residues Gly865–Ser875. Residues Gly865–Ser890 form a disordered region.

Belongs to the SNF2/RAD54 helicase family. SMARCAL1 subfamily. In terms of assembly, interacts with RPA2; the interaction is direct and mediates the recruitment by the RPA complex of SMARCAL1 to sites of DNA damage. In terms of processing, DNA damage-regulated phosphorylation by kinases that may include ATM, ATR and PRKDC.

The protein resides in the nucleus. The catalysed reaction is ATP + H2O = ADP + phosphate + H(+). Its function is as follows. ATP-dependent annealing helicase that binds selectively to fork DNA relative to ssDNA or dsDNA and catalyzes the rewinding of the stably unwound DNA. Rewinds single-stranded DNA bubbles that are stably bound by replication protein A (RPA). Acts throughout the genome to reanneal stably unwound DNA, performing the opposite reaction of many enzymes, such as helicases and polymerases, that unwind DNA. May play an important role in DNA damage response by acting at stalled replication forks. The protein is SWI/SNF-related matrix-associated actin-dependent regulator of chromatin subfamily A-like protein 1 (Smarcal1) of Rattus norvegicus (Rat).